The sequence spans 473 residues: ATP synthase subunit beta (473 aa).

158–165 lines the ATP pocket; it reads GGAGVGKT.

The protein belongs to the ATPase alpha/beta chains family. As to quaternary structure, F-type ATPases have 2 components, CF(1) - the catalytic core - and CF(0) - the membrane proton channel. CF(1) has five subunits: alpha(3), beta(3), gamma(1), delta(1), epsilon(1). CF(0) has three main subunits: a(1), b(2) and c(9-12). The alpha and beta chains form an alternating ring which encloses part of the gamma chain. CF(1) is attached to CF(0) by a central stalk formed by the gamma and epsilon chains, while a peripheral stalk is formed by the delta and b chains.

The protein resides in the cell membrane. It catalyses the reaction ATP + H2O + 4 H(+)(in) = ADP + phosphate + 5 H(+)(out). Its function is as follows. Produces ATP from ADP in the presence of a proton gradient across the membrane. The catalytic sites are hosted primarily by the beta subunits. The chain is ATP synthase subunit beta from Geobacillus thermodenitrificans (strain NG80-2).